The primary structure comprises 440 residues: GTPase Obg (440 aa).

In terms of domain architecture, Obg spans 5-163 (STFVDQTKIE…RTLRLELKVL (159 aa)). Residues 164-338 (ADVGLVGFPS…LMSRAADLVS (175 aa)) form the OBG-type G domain. Residues 170–177 (GFPSVGKS), 195–199 (FTTLK), 217–220 (DLPG), 288–291 (SQMD), and 319–321 (SSV) each bind GTP. Mg(2+)-binding residues include serine 177 and threonine 197. Residues 362 to 440 (YHRPEKMEFT…IGDFSFEFVQ (79 aa)) form the OCT domain.

This sequence belongs to the TRAFAC class OBG-HflX-like GTPase superfamily. OBG GTPase family. In terms of assembly, monomer. The cofactor is Mg(2+).

It localises to the cytoplasm. Its function is as follows. An essential GTPase which binds GTP, GDP and possibly (p)ppGpp with moderate affinity, with high nucleotide exchange rates and a fairly low GTP hydrolysis rate. Plays a role in control of the cell cycle, stress response, ribosome biogenesis and in those bacteria that undergo differentiation, in morphogenesis control. This chain is GTPase Obg, found in Lactobacillus delbrueckii subsp. bulgaricus (strain ATCC 11842 / DSM 20081 / BCRC 10696 / JCM 1002 / NBRC 13953 / NCIMB 11778 / NCTC 12712 / WDCM 00102 / Lb 14).